The sequence spans 408 residues: Zinc finger and SCAN domain-containing protein 1 (408 aa).

Residues 1–34 form a disordered region; it reads MLPRPKAPASPRRPQTPTPSEQDADPGPASPRDT. Positions 38 to 120 constitute an SCAN box domain; sequence RLRFRQFQYH…SLVEDLTQMC (83 aa). 3 disordered regions span residues 136-155, 177-203, and 215-273; these read WSFGEEEDGKSPRSQKEPSQ, LETTQLQQSLHTRAEAEAPRAPGLLGS, and DEPE…GGTQ. The segment covering 177-187 has biased composition (polar residues); it reads LETTQLQQSLH. 2 consecutive C2H2-type zinc fingers follow at residues 292–314 and 320–342; these read FQCADCGMVFTWVTHFIEHQKTH and FPCPECGKVFLHNSVLTEHGKIH. The tract at residues 344–379 is disordered; that stretch reads LEPPRKKAPRSKGPRESVPPRDGAQGPVAPRSPKRP. A C2H2-type 3 zinc finger spans residues 380-402; it reads FQCSVCGKAFPWMVHLIDHQKLH.

The protein localises to the nucleus. May be involved in transcriptional regulation. The protein is Zinc finger and SCAN domain-containing protein 1 (ZSCAN1) of Homo sapiens (Human).